Consider the following 503-residue polypeptide: Glutamate--tRNA ligase (503 aa).

The 'HIGH' region motif lies at 26-36; the sequence is PSPTGTPHVGL. Positions 126–148 are disordered; that stretch reads TPEEVEARHRAAGRDPKLGYDNA. Residues 130–148 show a composition bias toward basic and acidic residues; the sequence is VEARHRAAGRDPKLGYDNA. Residues 270-274 carry the 'KMSKS' region motif; sequence KLSKR. Residue Lys-273 participates in ATP binding.

It belongs to the class-I aminoacyl-tRNA synthetase family. Glutamate--tRNA ligase type 1 subfamily. Monomer.

It is found in the cytoplasm. It catalyses the reaction tRNA(Glu) + L-glutamate + ATP = L-glutamyl-tRNA(Glu) + AMP + diphosphate. In terms of biological role, catalyzes the attachment of glutamate to tRNA(Glu) in a two-step reaction: glutamate is first activated by ATP to form Glu-AMP and then transferred to the acceptor end of tRNA(Glu). This is Glutamate--tRNA ligase from Saccharopolyspora erythraea (strain ATCC 11635 / DSM 40517 / JCM 4748 / NBRC 13426 / NCIMB 8594 / NRRL 2338).